The chain runs to 78 residues: Small ribosomal subunit protein uS17 (78 aa).

Belongs to the universal ribosomal protein uS17 family. As to quaternary structure, part of the 30S ribosomal subunit.

One of the primary rRNA binding proteins, it binds specifically to the 5'-end of 16S ribosomal RNA. The chain is Small ribosomal subunit protein uS17 from Sinorhizobium medicae (strain WSM419) (Ensifer medicae).